The sequence spans 349 residues: Phenylalanine--tRNA ligase alpha subunit (349 aa).

Mg(2+) is bound at residue Glu-258.

It belongs to the class-II aminoacyl-tRNA synthetase family. Phe-tRNA synthetase alpha subunit type 1 subfamily. Tetramer of two alpha and two beta subunits. Requires Mg(2+) as cofactor.

It localises to the cytoplasm. It catalyses the reaction tRNA(Phe) + L-phenylalanine + ATP = L-phenylalanyl-tRNA(Phe) + AMP + diphosphate + H(+). This is Phenylalanine--tRNA ligase alpha subunit from Rickettsia akari (strain Hartford).